Here is a 163-residue protein sequence, read N- to C-terminus: ADP-ribosylation factor-like protein 2-binding protein (163 aa).

Belongs to the ARL2BP family. In terms of assembly, interacts with GTP bound ARL2 and ARL3; the complex ARL2-ARL2BP as well as ARL2BP alone, binds to SLC25A4/ANT1. Interaction with ARL2 may be required for cilia basal body localization. Interacts with STAT3; interaction is enhanced with ARL2. Found in a complex with ARL2BP, ARL2 and SLC25A6. Found in a complex with ARL2, ARL2BP and SLC25A4. Interacts with STAT2, STAT3 and STAT4.

Its subcellular location is the cytoplasm. It localises to the mitochondrion intermembrane space. The protein resides in the cytoskeleton. It is found in the microtubule organizing center. The protein localises to the centrosome. Its subcellular location is the nucleus. It localises to the spindle. The protein resides in the cilium basal body. Together with ARL2, plays a role in the nuclear translocation, retention and transcriptional activity of STAT3. May play a role as an effector of ARL2. This Macaca fascicularis (Crab-eating macaque) protein is ADP-ribosylation factor-like protein 2-binding protein (ARL2BP).